A 101-amino-acid polypeptide reads, in one-letter code: Protein RnfH (101 aa).

The protein belongs to the UPF0125 (RnfH) family.

This Coxiella burnetii (strain CbuG_Q212) (Coxiella burnetii (strain Q212)) protein is Protein RnfH.